A 96-amino-acid polypeptide reads, in one-letter code: Maintenance of carboxysome distribution protein B (96 aa).

Basic and acidic residues predominate over residues 1–18 (MTNLEDKLSASIKTENKD). Residues 1–96 (MTNLEDKLSA…STHPRRVWPD (96 aa)) form a disordered region. Positions 59–74 (ARATTTKPAVSKSSKP) are enriched in low complexity.

In terms of assembly, monomer, associates with McdA:DNA. Interacts with shell components of the carboxysome.

Its subcellular location is the carboxysome. McdA and McdB together mediate carboxysome positioning on the nucleoid and to prevent their aggregation in the cell. Undergoes liquid-liquid phase separation at pH 7.0 in the presence of crowders polyethylene glycol or Ficoll. McdA is an ATPase that forms dynamic gradients on the nucleoid in response to adapter protein McdB, which associates with carboxysomes. The interplay between McdA gradients on the nucleoid and McdB-bound carboxysomes result in the equal spacing of Cbs along the cell length. Stimulates the ATPase activity of McdA, causing McdA to be released from DNA. Its function is as follows. Incorrect positioning (aggregation) of carboxysomes results in reduced CO(2) fixation by encapsulated form 1 ribulose-1,5-bisphosphate carboxylase (RuBisCO, cbbL/cbbS), which leads to slower growth. In Halothiobacillus neapolitanus (strain ATCC 23641 / c2) (Thiobacillus neapolitanus), this protein is Maintenance of carboxysome distribution protein B.